A 371-amino-acid chain; its full sequence is Gustatory receptor-like 65a (371 aa).

Residues 1–13 (MREVNLLNRFTRQ) lie on the Cytoplasmic side of the membrane. The helical transmembrane segment at 14–34 (FLFLIVLVTQICGVATFVYNS) threads the bilayer. Over 35–42 (KAQCFRQS) the chain is Extracellular. A helical transmembrane segment spans residues 43 to 63 (GFLRFYSSLVLIFLALFLIVT). Residues 64–72 (TSKMFHNLQ) lie on the Cytoplasmic side of the membrane. Residues 73–93 (AVWPYVVGSVIILVVRIHGLL) form a helical membrane-spanning segment. The Extracellular portion of the chain corresponds to 94 to 126 (ESAEIVELLNQMLRIMRQVNLMARHPNLFRLKH). A helical transmembrane segment spans residues 127 to 147 (LLLLLLALQNLLRSLNTIVGI). The Cytoplasmic portion of the chain corresponds to 148–161 (SNHSAEAYDSFLNS). The chain crosses the membrane as a helical span at residues 162–182 (VILLIILAVLLSFLLQITINI). The Extracellular portion of the chain corresponds to 183–251 (CLFVVLIATY…FHITVRIIRH (69 aa)). A helical membrane pass occupies residues 252–272 (FRFHWLCAIIYGLLPFFSLTA). The Cytoplasmic segment spans residues 273 to 277 (KDQNG). A helical transmembrane segment spans residues 278-298 (FNFLIISALNIIFQWTIFAIL). Over 299–371 (SRESRITRSL…FVNRLEYLHI (73 aa)) the chain is Extracellular.

It is found in the cell membrane. The sequence is that of Gustatory receptor-like 65a from Drosophila melanogaster (Fruit fly).